We begin with the raw amino-acid sequence, 935 residues long: Coatomer subunit gamma (935 aa).

HEAT repeat units follow at residues 258 to 296, 337 to 372, 373 to 410, 412 to 449, and 524 to 562; these read PQLF…RNSR, PEKI…TGTS, KNIS…NFPQ, WKSI…FVPQ, and PTLY…ARNK. The interval 630-656 is disordered; it reads KSETTLDTTPEAESVPEKRADANSFAG. Position 638 is a phosphothreonine (Thr638). At Ser643 the chain carries Phosphoserine. A Glycyl lysine isopeptide (Lys-Gly) (interchain with G-Cter in ubiquitin) cross-link involves residue Lys647. Phosphoserine is present on Ser653.

Belongs to the COPG family. Oligomeric complex that consists of at least the alpha, beta, beta', gamma, delta, epsilon and zeta subunits. Interacts (via C-terminus) with GEA1 (via N-terminal region) and KEI1 (via C-terminal region).

The protein resides in the cytoplasm. It localises to the golgi apparatus membrane. It is found in the cytoplasmic vesicle. Its subcellular location is the COPI-coated vesicle membrane. The protein localises to the endosome. The coatomer is a cytosolic protein complex that binds to dilysine motifs and reversibly associates with Golgi non-clathrin-coated vesicles, which further mediate biosynthetic protein transport from the ER, via the Golgi up to the trans Golgi network. Coatomer complex is required for budding from Golgi membranes, and is essential for the retrograde Golgi-to-ER transport of dilysine-tagged proteins. The protein is Coatomer subunit gamma (SEC21) of Saccharomyces cerevisiae (strain ATCC 204508 / S288c) (Baker's yeast).